Reading from the N-terminus, the 162-residue chain is Fibroblast growth factor 22 (162 aa).

A signal peptide spans 1–22 (MRSRLWLGLAWLLLARAPGAPG).

Belongs to the heparin-binding growth factors family. Interacts with FGFR1 and FGFR2. Interacts with FGFBP1. Preferentially expressed in skin; low expression in brain. Expressed in the inner root sheath of the hair follicle.

The protein resides in the secreted. Its function is as follows. Plays a role in the fasting response, glucose homeostasis, lipolysis and lipogenesis. Can stimulate cell proliferation (in vitro). May be involved in hair development. In Mus musculus (Mouse), this protein is Fibroblast growth factor 22 (Fgf22).